Consider the following 282-residue polypeptide: HTH-type transcriptional activator RhaR (282 aa).

In terms of domain architecture, HTH araC/xylS-type spans 179–277; that stretch reads DKLITRLAAS…GMTPSQWRHL (99 aa). 2 DNA-binding regions (H-T-H motif) span residues 196–217 and 244–267; these read DKFCDEASCSERVLRQQFRQQT and ISDISTECGFEDSNYFSVVFTRET.

Binds DNA as a dimer.

Its subcellular location is the cytoplasm. Activates expression of the rhaSR operon in response to L-rhamnose. The polypeptide is HTH-type transcriptional activator RhaR (Escherichia coli O139:H28 (strain E24377A / ETEC)).